We begin with the raw amino-acid sequence, 252 residues long: MAQQSLLDVQLVACSTFTTPSGVDWKVDSAATDSEALVEFAGRACYETFDKPNPRTAANDAYIRHIMEVGHMALLEHPTATVYIRGLSRSATHELVRHRHFSFSQLSQRFVHSDETHVVIPPLIDNDPQLRELFLSTVDEVRFAYSELMTALDNKLADEPNAILRRKQARQAARSILPNATESRIVVTGNFRAWRHFIGMRATEHADVEIRSLAVRCLEILKEKAPTVFSDFETSVLSDGSIMATSPYVTDY.

Residues 7–235 (LDVQLVACST…PTVFSDFETS (229 aa)) form the ThyX domain. Residues 94-97 (ELVR), 105-109 (QLSQR), and Arg174 each bind dUMP. FAD contacts are provided by residues 97 to 99 (RHR) and Gln105. Positions 97 to 107 (RHRHFSFSQLS) match the ThyX motif motif. Residues 190 to 192 (NFR) and His196 each bind FAD. Arg201 is a binding site for dUMP. Arg201 acts as the Involved in ionization of N3 of dUMP, leading to its activation in catalysis.

This sequence belongs to the thymidylate synthase ThyX family. Homotetramer. The cofactor is FAD.

It carries out the reaction dUMP + (6R)-5,10-methylene-5,6,7,8-tetrahydrofolate + NADPH + H(+) = dTMP + (6S)-5,6,7,8-tetrahydrofolate + NADP(+). The protein operates within pyrimidine metabolism; dTTP biosynthesis. Catalyzes the reductive methylation of 2'-deoxyuridine-5'-monophosphate (dUMP) to 2'-deoxythymidine-5'-monophosphate (dTMP) while utilizing 5,10-methylenetetrahydrofolate (mTHF) as the methyl donor, and NADPH and FADH(2) as the reductant. The protein is Flavin-dependent thymidylate synthase of Corynebacterium diphtheriae (strain ATCC 700971 / NCTC 13129 / Biotype gravis).